The sequence spans 60 residues: UPF0434 protein YcaR (60 aa).

This sequence belongs to the UPF0434 family.

This chain is UPF0434 protein YcaR, found in Salmonella arizonae (strain ATCC BAA-731 / CDC346-86 / RSK2980).